The primary structure comprises 550 residues: Hydroxylamine reductase (550 aa).

Residues cysteine 4, cysteine 7, cysteine 19, and cysteine 26 each coordinate [2Fe-2S] cluster. Residues histidine 249, glutamate 273, cysteine 317, cysteine 405, cysteine 433, cysteine 458, glutamate 492, and lysine 494 each coordinate hybrid [4Fe-2O-2S] cluster. A Cysteine persulfide modification is found at cysteine 405.

Belongs to the HCP family. Requires [2Fe-2S] cluster as cofactor. Hybrid [4Fe-2O-2S] cluster serves as cofactor.

Its subcellular location is the cytoplasm. It carries out the reaction A + NH4(+) + H2O = hydroxylamine + AH2 + H(+). Its function is as follows. Catalyzes the reduction of hydroxylamine to form NH(3) and H(2)O. The polypeptide is Hydroxylamine reductase (Aeromonas salmonicida (strain A449)).